The following is a 425-amino-acid chain: UDP-N-acetylglucosamine 1-carboxyvinyltransferase (425 aa).

Lys22–Asn23 serves as a coordination point for phosphoenolpyruvate. Position 93 (Arg93) interacts with UDP-N-acetyl-alpha-D-glucosamine. Catalysis depends on Cys117, which acts as the Proton donor. Cys117 is modified (2-(S-cysteinyl)pyruvic acid O-phosphothioketal). UDP-N-acetyl-alpha-D-glucosamine-binding positions include Arg122–Leu126, Asp307, and Val329.

This sequence belongs to the EPSP synthase family. MurA subfamily.

It localises to the cytoplasm. It catalyses the reaction phosphoenolpyruvate + UDP-N-acetyl-alpha-D-glucosamine = UDP-N-acetyl-3-O-(1-carboxyvinyl)-alpha-D-glucosamine + phosphate. It functions in the pathway cell wall biogenesis; peptidoglycan biosynthesis. Cell wall formation. Adds enolpyruvyl to UDP-N-acetylglucosamine. In Prosthecochloris aestuarii (strain DSM 271 / SK 413), this protein is UDP-N-acetylglucosamine 1-carboxyvinyltransferase.